Here is a 101-residue protein sequence, read N- to C-terminus: Small ribosomal subunit protein uS14A (101 aa).

Disordered stretches follow at residues methionine 1–tyrosine 20 and threonine 28–glycine 72. Basic and acidic residues-rich tracts occupy residues glutamate 38–arginine 53 and arginine 61–proline 70.

It belongs to the universal ribosomal protein uS14 family. Part of the 30S ribosomal subunit. Contacts proteins S3 and S10.

Functionally, binds 16S rRNA, required for the assembly of 30S particles and may also be responsible for determining the conformation of the 16S rRNA at the A site. The polypeptide is Small ribosomal subunit protein uS14A (Streptomyces avermitilis (strain ATCC 31267 / DSM 46492 / JCM 5070 / NBRC 14893 / NCIMB 12804 / NRRL 8165 / MA-4680)).